We begin with the raw amino-acid sequence, 509 residues long: Maturase K (509 aa).

It belongs to the intron maturase 2 family. MatK subfamily.

The protein localises to the plastid. Its subcellular location is the chloroplast. Functionally, usually encoded in the trnK tRNA gene intron. Probably assists in splicing its own and other chloroplast group II introns. The sequence is that of Maturase K from Nicotiana clevelandii (Wild tobacco).